The chain runs to 341 residues: Cyclic GMP-AMP synthase (341 aa).

Serine 56 provides a ligand contact to ATP. Residues aspartate 71 and aspartate 73 contribute to the active site. Aspartate 73 contacts Mg(2+). Asparagine 109 is a binding site for ATP. Aspartate 123 is an active-site residue. Aspartate 123 provides a ligand contact to Mg(2+). Residues leucine 192 and aspartate 238 each coordinate ATP.

This sequence belongs to the CD-NTase family. B04 subfamily. In terms of assembly, monomer. Mg(2+) is required as a cofactor.

It catalyses the reaction GTP + ATP = 3',3'-cGAMP + 2 diphosphate. Its function is as follows. Cyclic nucleotide synthase (second messenger synthase) of a CBASS antivirus system. CBASS (cyclic oligonucleotide-based antiphage signaling system) provides immunity against bacteriophage. The CD-NTase protein synthesizes cyclic nucleotides in response to infection; these serve as specific second messenger signals. The signals activate a diverse range of effectors, leading to bacterial cell death and thus abortive phage infection. A type II-A(GA) CBASS system. Catalyzes the synthesis of 3'3'-cyclic GMP-AMP (3'3'-cGAMP) from GTP and ATP, a second messenger in cell signal transduction. May make another product. Controls the activity of the CBASS cGAMP-activated phospholipase effector protein. The protein is Cyclic GMP-AMP synthase of Bacteroides fragilis.